Here is a 336-residue protein sequence, read N- to C-terminus: Ribosomal RNA large subunit methyltransferase F (336 aa).

The segment covering 212-231 (HHLERSRGKPTGKGVRRVRS) has biased composition (basic residues). Positions 212–234 (HHLERSRGKPTGKGVRRVRSGRM) are disordered.

It belongs to the methyltransferase superfamily. METTL16/RlmF family.

It localises to the cytoplasm. The enzyme catalyses adenosine(1618) in 23S rRNA + S-adenosyl-L-methionine = N(6)-methyladenosine(1618) in 23S rRNA + S-adenosyl-L-homocysteine + H(+). Functionally, specifically methylates the adenine in position 1618 of 23S rRNA. This is Ribosomal RNA large subunit methyltransferase F from Methylobacillus flagellatus (strain ATCC 51484 / DSM 6875 / VKM B-1610 / KT).